A 669-amino-acid chain; its full sequence is Matrix metalloproteinase-15 (669 aa).

The segment at residues 1 to 41 (MGSDPSAPGRPGWTGSLLGDREEAARPRLLPLLLVLLGCLG) is a signal peptide (or 45). Residues 42 to 131 (LGVAAEDAEV…KANLRRRRKR (90 aa)) constitute a propeptide that is removed on maturation. Residues 109–116 (PRCGVPDQ) carry the Cysteine switch motif. C111 contacts Zn(2+). Residues 132 to 625 (YALTGRKWNN…QMEEVARTVN (494 aa)) are Extracellular-facing. An N-linked (GlcNAc...) asparagine glycan is attached at N150. A Zn(2+)-binding site is contributed by H259. The active site involves E260. Residues H263 and H269 each contribute to the Zn(2+) site. Positions 300-370 (QQLYGTPDGQ…RPDQYGPNIC (71 aa)) are disordered. Over residues 305 to 322 (TPDGQPQPTQPLPTVTPR) the composition is skewed to low complexity. Residues 333–342 (RPPQPPPPGG) show a composition bias toward pro residues. 4 Hemopexin repeats span residues 367 to 415 (PNIC…WRGL), 416 to 461 (PGDI…GLGI), 463 to 511 (YDRI…QGIP), and 512 to 559 (ASPK…FMGC). A disulfide bond links C370 and C559. The interval 574–593 (RPPFNPHGGAEPGADSAEGD) is disordered. The residue at position 589 (S589) is a Phosphoserine. The helical transmembrane segment at 626 to 646 (VVMVLVPLLLLLCVLGLTYAL) threads the bilayer. Residues 647 to 669 (VQMQRKGAPRVLLYCKRSLQEWV) are Cytoplasmic-facing.

The protein belongs to the peptidase M10A family. It depends on Zn(2+) as a cofactor. The cofactor is Ca(2+). Post-translationally, the precursor is cleaved by a furin endopeptidase. In terms of tissue distribution, appeared to be synthesized preferentially in liver, placenta, testis, colon and intestine. Substantial amounts are also detected in pancreas, kidney, lung, heart and skeletal muscle.

The protein localises to the membrane. Its function is as follows. Endopeptidase that degrades various components of the extracellular matrix. May activate progelatinase A. The protein is Matrix metalloproteinase-15 (MMP15) of Homo sapiens (Human).